The chain runs to 506 residues: uncharacterized protein (506 aa).

2 disordered regions span residues P104–S144 and Q397–P456. Low complexity predominate over residues E130–S144. Over residues I405 to E443 the composition is skewed to basic and acidic residues. Residues I405 to L455 adopt a coiled-coil conformation.

This is an uncharacterized protein from Dictyostelium discoideum (Social amoeba).